The following is a 462-amino-acid chain: ATP synthase subunit beta 2 (462 aa).

Gly151–Thr158 contacts ATP.

It belongs to the ATPase alpha/beta chains family. As to quaternary structure, F-type ATPases have 2 components, CF(1) - the catalytic core - and CF(0) - the membrane proton channel. CF(1) has five subunits: alpha(3), beta(3), gamma(1), delta(1), epsilon(1). CF(0) has three main subunits: a(1), b(2) and c(9-12). The alpha and beta chains form an alternating ring which encloses part of the gamma chain. CF(1) is attached to CF(0) by a central stalk formed by the gamma and epsilon chains, while a peripheral stalk is formed by the delta and b chains.

The protein localises to the cell inner membrane. It catalyses the reaction ATP + H2O + 4 H(+)(in) = ADP + phosphate + 5 H(+)(out). In terms of biological role, produces ATP from ADP in the presence of a proton gradient across the membrane. The catalytic sites are hosted primarily by the beta subunits. The sequence is that of ATP synthase subunit beta 2 from Chlorobaculum tepidum (strain ATCC 49652 / DSM 12025 / NBRC 103806 / TLS) (Chlorobium tepidum).